The sequence spans 185 residues: Ribosome-recycling factor (185 aa).

Belongs to the RRF family.

The protein localises to the cytoplasm. Functionally, responsible for the release of ribosomes from messenger RNA at the termination of protein biosynthesis. May increase the efficiency of translation by recycling ribosomes from one round of translation to another. The chain is Ribosome-recycling factor from Brevibacillus brevis (strain 47 / JCM 6285 / NBRC 100599).